A 136-amino-acid chain; its full sequence is Histone H3 (136 aa).

The tract at residues 1–43 (MARTKQTARKSTGGKAPRKQLASKAARKSAPSTGGVKKPHRYK) is disordered. Lys-5 and Lys-10 each carry N6,N6,N6-trimethyllysine; alternate. Lys-5 is modified (N6,N6-dimethyllysine; alternate). Lys-5 is modified (N6-methyllysine; alternate). N6-acetyllysine; alternate is present on Lys-10. Ser-11 is modified (phosphoserine). Position 15 is an N6,N6-dimethyllysine; alternate (Lys-15). Lys-15, Lys-19, Lys-24, Lys-28, and Lys-37 each carry N6-methyllysine; alternate. N6-acetyllysine; alternate is present on residues Lys-15, Lys-19, Lys-24, Lys-28, and Lys-37. N6,N6,N6-trimethyllysine; alternate is present on residues Lys-28 and Lys-37. Lys-28 and Lys-37 each carry N6,N6-dimethyllysine; alternate. N6-acetyllysine occurs at positions 57 and 65. Position 80 is an N6,N6,N6-trimethyllysine; alternate (Lys-80). An N6,N6-dimethyllysine; alternate modification is found at Lys-80. The residue at position 80 (Lys-80) is an N6-methyllysine; alternate.

The protein belongs to the histone H3 family. In terms of assembly, the nucleosome is a histone octamer containing two molecules each of H2A, H2B, H3 and H4 assembled in one H3-H4 heterotetramer and two H2A-H2B heterodimers. The octamer wraps approximately 147 bp of DNA. In terms of processing, phosphorylated to form H3S10ph. H3S10ph promotes subsequent H3K14ac formation and is required for transcriptional activation through TBP recruitment to the promoters. Mono-, di- and trimethylated by the COMPASS complex to form H3K4me1/2/3. H3K4me activates gene expression by regulating transcription elongation and plays a role in telomere length maintenance. H3K4me enrichment correlates with transcription levels, and occurs in a 5' to 3' gradient with H3K4me3 enrichment at the 5'-end of genes, shifting to H3K4me2 and then H3K4me1. Trimethylated by methyltransferase dim-5 to form H3K9me3. H3K9me3, but not H3K9me2, marks chromatin regions for cytosine methylation. Methylated by set-2 to form H3K36me. H3K36me represses gene expression. Methylated by dot-1 to form H3K79me. H3K79me is required for association of SIR proteins with telomeric regions and for telomeric silencing. The COMPASS-mediated formation of H3K4me2/3 and the dot-1-mediated formation of H3K79me require H2BK123ub1. Post-translationally, acetylation of histone H3 leads to transcriptional activation. H3K14ac formation by gcn-5 is promoted by H3S10ph. H3K14ac can also be formed by esa-1. H3K56ac formation occurs predominantly in newly synthesized H3 molecules during G1, S and G2/M of the cell cycle and may be involved in DNA repair.

The protein resides in the nucleus. It is found in the chromosome. Functionally, core component of nucleosome. Nucleosomes wrap and compact DNA into chromatin, limiting DNA accessibility to the cellular machineries which require DNA as a template. Histones thereby play a central role in transcription regulation, DNA repair, DNA replication and chromosomal stability. DNA accessibility is regulated via a complex set of post-translational modifications of histones, also called histone code, and nucleosome remodeling. This Neurospora crassa (strain ATCC 24698 / 74-OR23-1A / CBS 708.71 / DSM 1257 / FGSC 987) protein is Histone H3 (hh3).